We begin with the raw amino-acid sequence, 271 residues long: 4-hydroxy-tetrahydrodipicolinate reductase (271 aa).

Residues 10–15 (GAGGRM), E36, 100–102 (GTT), and 124–127 (SGNM) each bind NAD(+). The active-site Proton donor/acceptor is the H157. H158 is a (S)-2,3,4,5-tetrahydrodipicolinate binding site. Catalysis depends on K161, which acts as the Proton donor. Residue 167-168 (GT) participates in (S)-2,3,4,5-tetrahydrodipicolinate binding.

The protein belongs to the DapB family.

It localises to the cytoplasm. The enzyme catalyses (S)-2,3,4,5-tetrahydrodipicolinate + NAD(+) + H2O = (2S,4S)-4-hydroxy-2,3,4,5-tetrahydrodipicolinate + NADH + H(+). It carries out the reaction (S)-2,3,4,5-tetrahydrodipicolinate + NADP(+) + H2O = (2S,4S)-4-hydroxy-2,3,4,5-tetrahydrodipicolinate + NADPH + H(+). The protein operates within amino-acid biosynthesis; L-lysine biosynthesis via DAP pathway; (S)-tetrahydrodipicolinate from L-aspartate: step 4/4. Its function is as follows. Catalyzes the conversion of 4-hydroxy-tetrahydrodipicolinate (HTPA) to tetrahydrodipicolinate. This is 4-hydroxy-tetrahydrodipicolinate reductase from Rhodopseudomonas palustris (strain BisB5).